Consider the following 193-residue polypeptide: Mediator of RNA polymerase II transcription subunit 30 (193 aa).

The disordered stretch occupies residues 1-20; sequence MSTPPLAASGMAPGPFAGPQ. Residue Ser-2 is modified to N-acetylserine. The span at 10 to 20 shows a compositional bias: low complexity; the sequence is GMAPGPFAGPQ. The stretch at 71 to 93 forms a coiled coil; it reads YQDRLAKLQDHLRQLSILFRKLR.

The protein belongs to the Mediator complex subunit 30 family. As to quaternary structure, component of the Mediator complex, which is composed of MED1, MED4, MED6, MED7, MED8, MED9, MED10, MED11, MED12, MED13, MED13L, MED14, MED15, MED16, MED17, MED18, MED19, MED20, MED21, MED22, MED23, MED24, MED25, MED26, MED27, MED29, MED30, MED31, CCNC, CDK8 and CDC2L6/CDK11. The MED12, MED13, CCNC and CDK8 subunits form a distinct module termed the CDK8 module. Mediator containing the CDK8 module is less active than Mediator lacking this module in supporting transcriptional activation. Individual preparations of the Mediator complex lacking one or more distinct subunits have been variously termed ARC, CRSP, DRIP, PC2, SMCC and TRAP.

It localises to the nucleus. Functionally, component of the Mediator complex, a coactivator involved in the regulated transcription of nearly all RNA polymerase II-dependent genes. Mediator functions as a bridge to convey information from gene-specific regulatory proteins to the basal RNA polymerase II transcription machinery. Mediator is recruited to promoters by direct interactions with regulatory proteins and serves as a scaffold for the assembly of a functional preinitiation complex with RNA polymerase II and the general transcription factors. This is Mediator of RNA polymerase II transcription subunit 30 (MED30) from Bos taurus (Bovine).